Consider the following 451-residue polypeptide: UPF0761 membrane protein Hhal_0704 (451 aa).

Transmembrane regions (helical) follow at residues 66–86, 122–142, 162–182, 204–224, 228–248, and 268–288; these read LLAI…FPVF, ELTA…LNTI, FMVY…SVAS, LLNL…YSLV, SVPV…FELA, and ALAA…VILI.

The protein belongs to the UPF0761 family.

Its subcellular location is the cell inner membrane. The chain is UPF0761 membrane protein Hhal_0704 from Halorhodospira halophila (strain DSM 244 / SL1) (Ectothiorhodospira halophila (strain DSM 244 / SL1)).